The primary structure comprises 153 residues: Deoxyuridine 5'-triphosphate nucleotidohydrolase (153 aa).

Substrate-binding positions include 71–73 (RSG), asparagine 84, 88–90 (TID), and lysine 98.

The protein belongs to the dUTPase family. Requires Mg(2+) as cofactor.

The enzyme catalyses dUTP + H2O = dUMP + diphosphate + H(+). It participates in pyrimidine metabolism; dUMP biosynthesis; dUMP from dCTP (dUTP route): step 2/2. In terms of biological role, this enzyme is involved in nucleotide metabolism: it produces dUMP, the immediate precursor of thymidine nucleotides and it decreases the intracellular concentration of dUTP so that uracil cannot be incorporated into DNA. The sequence is that of Deoxyuridine 5'-triphosphate nucleotidohydrolase from Wolbachia pipientis wMel.